Here is a 497-residue protein sequence, read N- to C-terminus: Glycerol kinase (497 aa).

Threonine 12 is an ADP binding site. Positions 12, 13, and 14 each coordinate ATP. Threonine 12 provides a ligand contact to sn-glycerol 3-phosphate. Arginine 16 is a binding site for ADP. Sn-glycerol 3-phosphate contacts are provided by arginine 82, glutamate 83, tyrosine 132, and aspartate 239. Positions 82, 83, 132, 239, and 240 each coordinate glycerol. Threonine 261 and glycine 303 together coordinate ADP. The ATP site is built by threonine 261, glycine 303, glutamine 307, and glycine 402. ADP is bound by residues glycine 402 and asparagine 406.

The protein belongs to the FGGY kinase family. As to quaternary structure, homodimer.

It carries out the reaction glycerol + ATP = sn-glycerol 3-phosphate + ADP + H(+). It functions in the pathway polyol metabolism; glycerol degradation via glycerol kinase pathway; sn-glycerol 3-phosphate from glycerol: step 1/1. Key enzyme in the regulation of glycerol uptake and metabolism. Catalyzes the phosphorylation of glycerol to yield sn-glycerol 3-phosphate. Can utilize other nucleoside triphosphates (GTP, CTP, UTP and ITP) as a phosphoryl donor. The polypeptide is Glycerol kinase (Thermococcus kodakarensis (strain ATCC BAA-918 / JCM 12380 / KOD1) (Pyrococcus kodakaraensis (strain KOD1))).